A 370-amino-acid chain; its full sequence is Glutamate 5-kinase (370 aa).

K17 lines the ATP pocket. Positions 56, 143, and 155 each coordinate substrate. Position 175–176 (175–176 (SD)) interacts with ATP. The 78-residue stretch at 280-357 (RGTIRVDAGA…AEIVAILGYS (78 aa)) folds into the PUA domain.

Belongs to the glutamate 5-kinase family.

The protein localises to the cytoplasm. It catalyses the reaction L-glutamate + ATP = L-glutamyl 5-phosphate + ADP. It functions in the pathway amino-acid biosynthesis; L-proline biosynthesis; L-glutamate 5-semialdehyde from L-glutamate: step 1/2. Catalyzes the transfer of a phosphate group to glutamate to form L-glutamate 5-phosphate. This is Glutamate 5-kinase from Cereibacter sphaeroides (strain ATCC 17023 / DSM 158 / JCM 6121 / CCUG 31486 / LMG 2827 / NBRC 12203 / NCIMB 8253 / ATH 2.4.1.) (Rhodobacter sphaeroides).